The following is a 318-amino-acid chain: Protease HtpX homolog (318 aa).

2 helical membrane-spanning segments follow: residues 6-26 (TAMLLAFMTALFMFVGFLIGG) and 28-48 (AGMMIAFLIAAGMNFFSYWNS). His130 contacts Zn(2+). Glu131 is an active-site residue. His134 serves as a coordination point for Zn(2+). 2 helical membrane passes run 145 to 165 (ITATLAGAISMLGNFAFFFGG) and 173 to 193 (PLGFVGVLVAMIVAPLAAMLV). Glu202 is a binding site for Zn(2+). The interval 284–318 (NVSTGPVRAVNPTRKSRSVPNTGRGGSQPPRGPWS) is disordered.

The protein belongs to the peptidase M48B family. It depends on Zn(2+) as a cofactor.

The protein resides in the cell inner membrane. The polypeptide is Protease HtpX homolog (Rhizobium etli (strain CIAT 652)).